Here is a 283-residue protein sequence, read N- to C-terminus: 2-dehydro-3-deoxyphosphooctonate aldolase (283 aa).

The protein belongs to the KdsA family.

It localises to the cytoplasm. The catalysed reaction is D-arabinose 5-phosphate + phosphoenolpyruvate + H2O = 3-deoxy-alpha-D-manno-2-octulosonate-8-phosphate + phosphate. Its pathway is carbohydrate biosynthesis; 3-deoxy-D-manno-octulosonate biosynthesis; 3-deoxy-D-manno-octulosonate from D-ribulose 5-phosphate: step 2/3. The protein operates within bacterial outer membrane biogenesis; lipopolysaccharide biosynthesis. This Methylococcus capsulatus (strain ATCC 33009 / NCIMB 11132 / Bath) protein is 2-dehydro-3-deoxyphosphooctonate aldolase.